Here is a 375-residue protein sequence, read N- to C-terminus: uncharacterized protein (375 aa).

Residues 1 to 12 (MAGNKKQVKKNT) show a composition bias toward basic residues. Disordered stretches follow at residues 1 to 76 (MAGN…EKKS) and 119 to 274 (KNKN…KEIK). Polar residues predominate over residues 26–39 (DTSNLDTAVQTSAS). The span at 129–141 (TATDGTTTTTNIP) shows a compositional bias: low complexity. Positions 175-185 (DETHSHKEEPK) are enriched in basic and acidic residues. Low complexity-rich tracts occupy residues 198–212 (SKQQ…SSSS) and 225–241 (PTPT…KSTP). The span at 256 to 274 (EQPKEKSSPAPVKKEKEIK) shows a compositional bias: basic and acidic residues. Helical transmembrane passes span 299–319 (VVYK…LVPL) and 327–347 (IYSY…TLFI). Residues 355-375 (ASKEQKSKSGNKKSTTRKVKA) are disordered. Positions 363–375 (SGNKKSTTRKVKA) are enriched in basic residues.

Its subcellular location is the membrane. This is an uncharacterized protein from Dictyostelium discoideum (Social amoeba).